The chain runs to 474 residues: Ribulose bisphosphate carboxylase/oxygenase activase, chloroplastic (474 aa).

The N-terminal 58 residues, Met-1–Leu-58, are a transit peptide targeting the chloroplast. Phosphothreonine; by CK2 is present on Thr-78. Gly-165 to Ser-172 is a binding site for ATP. Thr-283 is subject to Phosphothreonine.

Belongs to the RuBisCO activase family. In terms of processing, phosphorylated at Thr-78 by CK2.

The protein localises to the plastid. It localises to the chloroplast stroma. The protein resides in the chloroplast. Its subcellular location is the plastoglobule. Functionally, activation of RuBisCO (ribulose-1,5-bisphosphate carboxylase/oxygenase; EC 4.1.1.39) involves the ATP-dependent carboxylation of the epsilon-amino group of lysine leading to a carbamate structure. The polypeptide is Ribulose bisphosphate carboxylase/oxygenase activase, chloroplastic (RCA) (Arabidopsis thaliana (Mouse-ear cress)).